The following is a 435-amino-acid chain: Fez family zinc finger protein 2 (435 aa).

Positions 27 to 42 (SLAFSIERIMAKTSEP) match the Engrailed homology 1 repressor motif. C2H2-type zinc fingers lie at residues 254–276 (FTCE…MPVH), 282–304 (FVCK…KIIH), 310–332 (HKCN…IRIH), 338–360 (FVCE…KLTH), 366–388 (YKCT…MHTH), and 394–417 (FTCG…RKLH).

The protein belongs to the krueppel C2H2-type zinc-finger protein family.

Its subcellular location is the nucleus. In terms of biological role, transcription repressor. Component of the regulatory cascade that controls the development of dopaminergic (DA) and serotonergic (5HT) neurons. The polypeptide is Fez family zinc finger protein 2 (fezf2) (Xenopus tropicalis (Western clawed frog)).